The primary structure comprises 912 residues: Protein translocase subunit SecA (912 aa).

ATP contacts are provided by residues glutamine 87, 105–109 (GEGKT), and aspartate 508. Residues 865-912 (DEEAAQVQSGNAPVPVSQVTRDEPKVGRNDPCPCGSGKKYKHCHGQLS) form a disordered region. Residues cysteine 896, cysteine 898, cysteine 907, and histidine 908 each contribute to the Zn(2+) site. Residues 902 to 912 (KKYKHCHGQLS) show a composition bias toward basic residues.

Belongs to the SecA family. As to quaternary structure, monomer and homodimer. Part of the essential Sec protein translocation apparatus which comprises SecA, SecYEG and auxiliary proteins SecDF-YajC and YidC. Zn(2+) serves as cofactor.

It is found in the cell inner membrane. The protein localises to the cytoplasm. It carries out the reaction ATP + H2O + cellular proteinSide 1 = ADP + phosphate + cellular proteinSide 2.. Part of the Sec protein translocase complex. Interacts with the SecYEG preprotein conducting channel. Has a central role in coupling the hydrolysis of ATP to the transfer of proteins into and across the cell membrane, serving both as a receptor for the preprotein-SecB complex and as an ATP-driven molecular motor driving the stepwise translocation of polypeptide chains across the membrane. This chain is Protein translocase subunit SecA, found in Xanthomonas oryzae pv. oryzae (strain MAFF 311018).